We begin with the raw amino-acid sequence, 158 residues long: Endoribonuclease YbeY (158 aa).

Residues His-114, His-118, and His-124 each coordinate Zn(2+).

The protein belongs to the endoribonuclease YbeY family. Requires Zn(2+) as cofactor.

Its subcellular location is the cytoplasm. Functionally, single strand-specific metallo-endoribonuclease involved in late-stage 70S ribosome quality control and in maturation of the 3' terminus of the 16S rRNA. The protein is Endoribonuclease YbeY of Legionella pneumophila (strain Paris).